The following is a 440-amino-acid chain: Phosphatidylcholine-sterol acyltransferase (440 aa).

Residues 1–24 (MGPPGSPWQWVTLLLGLLLPPAAP) form the signal peptide. The N-linked (GlcNAc...) (complex) asparagine glycan is linked to Asn-44. Cysteines 74 and 98 form a disulfide. Asn-108 carries an N-linked (GlcNAc...) (complex) asparagine glycan. The active-site Nucleophile is Ser-205. Asn-296 carries an N-linked (GlcNAc...) (complex) asparagine glycan. A disulfide bridge connects residues Cys-337 and Cys-380. Residues Asp-369 and His-401 each act as charge relay system in the active site. Asn-408 carries an N-linked (GlcNAc...) (complex) asparagine glycan. O-linked (GalNAc...) threonine glycosylation is present at Thr-431. Ser-433 carries O-linked (GalNAc...) serine glycosylation.

This sequence belongs to the AB hydrolase superfamily. Lipase family. In terms of processing, O- and N-glycosylated. O-glycosylation on Thr-431 and Ser-433 consists of sialylated galactose beta 1--&gt;3N-acetylgalactosamine structures. N-glycosylated sites contain sialylated triantennary and/or biantennary complex structures. As to expression, detected in blood plasma. Detected in cerebral spinal fluid (at protein level). Detected in liver. Expressed mainly in brain, liver and testes.

It is found in the secreted. It catalyses the reaction a sterol + a 1,2-diacyl-sn-glycero-3-phosphocholine = a sterol ester + a 1-acyl-sn-glycero-3-phosphocholine. The catalysed reaction is a 1-O-alkyl-2-acetyl-sn-glycero-3-phosphocholine + H2O = a 1-O-alkyl-sn-glycero-3-phosphocholine + acetate + H(+). It carries out the reaction a 1-hexadecanoyl-2-acyl-sn-glycero-3-phosphocholine + (24S)-hydroxycholesterol = (24S)-24-hydroxycholesterol ester + 1-hexadecanoyl-sn-glycero-3-phosphocholine. The enzyme catalyses (24S)-hydroxycholesterol + 1-hexadecanoyl-2-(9Z,12Z-octadecadienoyl)-sn-glycero-3-phosphocholine = (24S)-hydroxycholesterol 3-linoleoate + 1-hexadecanoyl-sn-glycero-3-phosphocholine. It catalyses the reaction 1-hexadecanoyl-2-(5Z,8Z,11Z,14Z-eicosatetraenoyl)-sn-glycero-3-phosphocholine + cholesterol = cholesteryl (5Z,8Z,11Z,14Z)-eicosatetraenoate + 1-hexadecanoyl-sn-glycero-3-phosphocholine. The catalysed reaction is 1-hexadecanoyl-2-(9Z-octadecenoyl)-sn-glycero-3-phosphocholine + cholesterol = cholesteryl (9Z-octadecenoate) + 1-hexadecanoyl-sn-glycero-3-phosphocholine. It carries out the reaction 1-hexadecanoyl-2-(8Z,11Z,14Z-eicosatrienoyl)-sn-glycero-3-phosphocholine + cholesterol = cholesteryl (8Z,11Z,14Z)-eicosatrienoate + 1-hexadecanoyl-sn-glycero-3-phosphocholine. The enzyme catalyses 1-hexadecanoyl-2-(5Z,8Z,11Z-eicosatrienoyl)-sn-glycero-3-phosphocholine + cholesterol = cholesteryl (5Z,8Z,11Z)-eicosatrienoate + 1-hexadecanoyl-sn-glycero-3-phosphocholine. It catalyses the reaction 1-hexadecanoyl-2-(5Z,8Z,11Z,14Z,17Z-eicosapentaenoyl)-sn-glycero-3-phosphocholine + cholesterol = (5Z,8Z,11Z,14Z,17Z-eicosapentaenoyl)-cholesterol + 1-hexadecanoyl-sn-glycero-3-phosphocholine. The catalysed reaction is 1-hexadecanoyl-2-(9Z,12Z-octadecadienoyl)-sn-glycero-3-phosphocholine + cholesterol = cholesteryl (9Z,12Z)-octadecadienoate + 1-hexadecanoyl-sn-glycero-3-phosphocholine. It carries out the reaction 1-hexadecanoyl-2-(6Z,9Z,12Z-octadecatrienoyl)-sn-glycero-3-phosphocholine + cholesterol = (6Z,9Z,12Z-octadecatrienoyl)-cholesterol + 1-hexadecanoyl-sn-glycero-3-phosphocholine. The enzyme catalyses 1-hexadecanoyl-2-(11Z,14Z,17Z-eicosatrienoyl)-sn-glycero-3-phosphocholine + cholesterol = (11Z,14Z,17Z-eicosatrienoyl)-cholesterol + 1-hexadecanoyl-sn-glycero-3-phosphocholine. It catalyses the reaction 1-hexadecanoyl-2-(9Z,12Z,15Z-octadecatrienoyl)-sn-glycero-3-phosphocholine + cholesterol = (9Z,12Z,15Z-octadecatrienoyl)-cholesterol + 1-hexadecanoyl-sn-glycero-3-phosphocholine. The catalysed reaction is 1-hexadecanoyl-2-(9Z,12Z-octadecadienoyl)-sn-glycero-3-phosphocholine + H2O = (9Z,12Z)-octadecadienoate + 1-hexadecanoyl-sn-glycero-3-phosphocholine + H(+). It carries out the reaction 1-hexadecanoyl-2-(5Z,8Z,11Z,14Z-eicosatetraenoyl)-sn-glycero-3-phosphocholine + H2O = 1-hexadecanoyl-sn-glycero-3-phosphocholine + (5Z,8Z,11Z,14Z)-eicosatetraenoate + H(+). The enzyme catalyses a 1-O-alkyl-2-acetyl-sn-glycero-3-phosphocholine + 1-hexadecanoyl-sn-glycero-3-phosphocholine = 1-hexadecanoyl-2-acetyl-sn-glycero-3-phosphocholine + a 1-O-alkyl-sn-glycero-3-phosphocholine. APOA1 is the most potent activator in plasma. Also activated by APOE, APOC1 and APOA4. Inhibited by haptoglobin and 5,5'-dithiobis-(2-nitrobenzoic acid) (DTNB). Functionally, central enzyme in the extracellular metabolism of plasma lipoproteins. Synthesized mainly in the liver and secreted into plasma where it converts cholesterol and phosphatidylcholines (lecithins) to cholesteryl esters and lysophosphatidylcholines on the surface of high and low density lipoproteins (HDLs and LDLs). The cholesterol ester is then transported back to the liver. Has a preference for plasma 16:0-18:2 or 18:O-18:2 phosphatidylcholines. Also produced in the brain by primary astrocytes, and esterifies free cholesterol on nascent APOE-containing lipoproteins secreted from glia and influences cerebral spinal fluid (CSF) APOE- and APOA1 levels. Together with APOE and the cholesterol transporter ABCA1, plays a key role in the maturation of glial-derived, nascent lipoproteins. Required for remodeling high-density lipoprotein particles into their spherical forms. Catalyzes the hydrolysis of 1-O-alkyl-2-acetyl-sn-glycero-3-phosphocholine (platelet-activating factor or PAF) to 1-O-alkyl-sn-glycero-3-phosphocholine (lyso-PAF). Also catalyzes the transfer of the acetate group from PAF to 1-hexadecanoyl-sn-glycero-3-phosphocholine forming lyso-PAF. Catalyzes the esterification of (24S)-hydroxycholesterol (24(S)OH-C), also known as cerebrosterol to produce 24(S)OH-C monoesters. The chain is Phosphatidylcholine-sterol acyltransferase (LCAT) from Homo sapiens (Human).